Here is a 520-residue protein sequence, read N- to C-terminus: Erythritol kinase (520 aa).

Belongs to the FGGY kinase family.

The catalysed reaction is erythritol + ATP = D-erythritol 1-phosphate + ADP + H(+). It functions in the pathway carbohydrate metabolism; erythritol degradation. Its function is as follows. Catalyzes the phosphorylation of erythritol to D-erythritol-1-phosphate. The polypeptide is Erythritol kinase (Brucella abortus (strain 2308)).